The following is a 318-amino-acid chain: Cytochrome f (318 aa).

An N-terminal signal peptide occupies residues M1–A34. Heme-binding residues include F35, C55, C58, and H59. Residues V284–K304 form a helical membrane-spanning segment.

It belongs to the cytochrome f family. The 4 large subunits of the cytochrome b6-f complex are cytochrome b6, subunit IV (17 kDa polypeptide, petD), cytochrome f and the Rieske protein, while the 4 small subunits are PetG, PetL, PetM and PetN. The complex functions as a dimer. It depends on heme as a cofactor.

Its subcellular location is the plastid. It is found in the chloroplast thylakoid membrane. Its function is as follows. Component of the cytochrome b6-f complex, which mediates electron transfer between photosystem II (PSII) and photosystem I (PSI), cyclic electron flow around PSI, and state transitions. This is Cytochrome f from Rhodomonas salina (Cryptomonas salina).